Consider the following 881-residue polypeptide: Valine--tRNA ligase (881 aa).

Positions 49–59 (PNVTGKLHLGH) match the 'HIGH' region motif. Residues 526–530 (KMSKS) carry the 'KMSKS' region motif. Residue lysine 529 coordinates ATP. The stretch at 810–881 (LADLINLDEE…VRQRLADLEK (72 aa)) forms a coiled coil.

It belongs to the class-I aminoacyl-tRNA synthetase family. ValS type 1 subfamily. As to quaternary structure, monomer.

The protein localises to the cytoplasm. The catalysed reaction is tRNA(Val) + L-valine + ATP = L-valyl-tRNA(Val) + AMP + diphosphate. Functionally, catalyzes the attachment of valine to tRNA(Val). As ValRS can inadvertently accommodate and process structurally similar amino acids such as threonine, to avoid such errors, it has a 'posttransfer' editing activity that hydrolyzes mischarged Thr-tRNA(Val) in a tRNA-dependent manner. In Bacillus anthracis, this protein is Valine--tRNA ligase.